Here is a 428-residue protein sequence, read N- to C-terminus: Glutamate--tRNA ligase 2 (428 aa).

Residues 6–16 carry the 'HIGH' region motif; the sequence is PSPTGDMRTEQ.

It belongs to the class-I aminoacyl-tRNA synthetase family. Glutamate--tRNA ligase type 1 subfamily. As to quaternary structure, monomer.

The protein localises to the cytoplasm. It carries out the reaction tRNA(Glu) + L-glutamate + ATP = L-glutamyl-tRNA(Glu) + AMP + diphosphate. Functionally, catalyzes the attachment of glutamate to tRNA(Glu) in a two-step reaction: glutamate is first activated by ATP to form Glu-AMP and then transferred to the acceptor end of tRNA(Glu). This is Glutamate--tRNA ligase 2 from Sulfurovum sp. (strain NBC37-1).